The following is a 137-amino-acid chain: Large ribosomal subunit protein uL16 (137 aa).

It belongs to the universal ribosomal protein uL16 family. In terms of assembly, part of the 50S ribosomal subunit.

Binds 23S rRNA and is also seen to make contacts with the A and possibly P site tRNAs. This chain is Large ribosomal subunit protein uL16, found in Sorangium cellulosum (strain So ce56) (Polyangium cellulosum (strain So ce56)).